Here is a 125-residue protein sequence, read N- to C-terminus: Large ribosomal subunit protein bL12 (125 aa).

Belongs to the bacterial ribosomal protein bL12 family. In terms of assembly, homodimer. Part of the ribosomal stalk of the 50S ribosomal subunit. Forms a multimeric L10(L12)X complex, where L10 forms an elongated spine to which 2 to 4 L12 dimers bind in a sequential fashion. Binds GTP-bound translation factors.

Its function is as follows. Forms part of the ribosomal stalk which helps the ribosome interact with GTP-bound translation factors. Is thus essential for accurate translation. This Liberibacter africanus (Citrus greening disease) protein is Large ribosomal subunit protein bL12.